Here is a 142-residue protein sequence, read N- to C-terminus: Large ribosomal subunit protein bL19 (142 aa).

This sequence belongs to the bacterial ribosomal protein bL19 family.

This protein is located at the 30S-50S ribosomal subunit interface and may play a role in the structure and function of the aminoacyl-tRNA binding site. The chain is Large ribosomal subunit protein bL19 from Rickettsia bellii (strain OSU 85-389).